The chain runs to 233 residues: Large ribosomal subunit protein uL1 (233 aa).

It belongs to the universal ribosomal protein uL1 family. As to quaternary structure, part of the 50S ribosomal subunit.

Binds directly to 23S rRNA. The L1 stalk is quite mobile in the ribosome, and is involved in E site tRNA release. Its function is as follows. Protein L1 is also a translational repressor protein, it controls the translation of the L11 operon by binding to its mRNA. In Novosphingobium aromaticivorans (strain ATCC 700278 / DSM 12444 / CCUG 56034 / CIP 105152 / NBRC 16084 / F199), this protein is Large ribosomal subunit protein uL1.